Consider the following 500-residue polypeptide: Cytochrome P450 81F1 (500 aa).

A helical transmembrane segment spans residues 1–21 (MLYFILLPLLFLVISYKFLYS). Residue Lys248 forms a Glycyl lysine isopeptide (Lys-Gly) (interchain with G-Cter in ubiquitin) linkage. Cys438 lines the heme pocket.

The protein belongs to the cytochrome P450 family. Requires heme as cofactor.

It is found in the membrane. It participates in secondary metabolite biosynthesis. Its function is as follows. Involved in indole glucosinolate biosynthesis. Catalyzes hydroxylation reactions of the glucosinolate indole ring. Converts indol-3-yl-methylglucosinolate (I3M) to 4-hydroxy-indol-3-yl-methylglucosinolate (4OH-I3M) and/or 1-hydroxy-indol-3-yl-methylglucosinolate (1OH-I3M) intermediates. These hydroxy intermediates are converted to 4-methoxy-indol-3-yl-methylglucosinolate (4MO-I3M) and 1-methoxy-indol-3-yl-methylglucosinolate (1MO-I3M) by indole glucosinolate methyltransferase 1 and 2 (IGMT1 and IGMT2). The protein is Cytochrome P450 81F1 of Arabidopsis thaliana (Mouse-ear cress).